Here is a 485-residue protein sequence, read N- to C-terminus: Glutamyl-tRNA(Gln) amidotransferase subunit A (485 aa).

Catalysis depends on charge relay system residues lysine 78 and serine 153. Catalysis depends on serine 177, which acts as the Acyl-ester intermediate.

Belongs to the amidase family. GatA subfamily. Heterotrimer of A, B and C subunits.

It carries out the reaction L-glutamyl-tRNA(Gln) + L-glutamine + ATP + H2O = L-glutaminyl-tRNA(Gln) + L-glutamate + ADP + phosphate + H(+). Functionally, allows the formation of correctly charged Gln-tRNA(Gln) through the transamidation of misacylated Glu-tRNA(Gln) in organisms which lack glutaminyl-tRNA synthetase. The reaction takes place in the presence of glutamine and ATP through an activated gamma-phospho-Glu-tRNA(Gln). This chain is Glutamyl-tRNA(Gln) amidotransferase subunit A, found in Bacillus cereus (strain Q1).